A 612-amino-acid chain; its full sequence is Dihydroxy-acid dehydratase (612 aa).

Residue D81 participates in Mg(2+) binding. C122 is a binding site for [2Fe-2S] cluster. Positions 123 and 124 each coordinate Mg(2+). Residue K124 is modified to N6-carboxylysine. C196 lines the [2Fe-2S] cluster pocket. E492 lines the Mg(2+) pocket. Catalysis depends on S518, which acts as the Proton acceptor.

The protein belongs to the IlvD/Edd family. Homodimer. [2Fe-2S] cluster is required as a cofactor. Mg(2+) serves as cofactor.

The catalysed reaction is (2R)-2,3-dihydroxy-3-methylbutanoate = 3-methyl-2-oxobutanoate + H2O. It catalyses the reaction (2R,3R)-2,3-dihydroxy-3-methylpentanoate = (S)-3-methyl-2-oxopentanoate + H2O. Its pathway is amino-acid biosynthesis; L-isoleucine biosynthesis; L-isoleucine from 2-oxobutanoate: step 3/4. It functions in the pathway amino-acid biosynthesis; L-valine biosynthesis; L-valine from pyruvate: step 3/4. Functionally, functions in the biosynthesis of branched-chain amino acids. Catalyzes the dehydration of (2R,3R)-2,3-dihydroxy-3-methylpentanoate (2,3-dihydroxy-3-methylvalerate) into 2-oxo-3-methylpentanoate (2-oxo-3-methylvalerate) and of (2R)-2,3-dihydroxy-3-methylbutanoate (2,3-dihydroxyisovalerate) into 2-oxo-3-methylbutanoate (2-oxoisovalerate), the penultimate precursor to L-isoleucine and L-valine, respectively. The polypeptide is Dihydroxy-acid dehydratase (Cereibacter sphaeroides (strain ATCC 17029 / ATH 2.4.9) (Rhodobacter sphaeroides)).